The following is a 129-amino-acid chain: Small ribosomal subunit protein uS11 (129 aa).

Belongs to the universal ribosomal protein uS11 family. Part of the 30S ribosomal subunit.

Functionally, located on the platform of the 30S subunit. The chain is Small ribosomal subunit protein uS11 from Methanocaldococcus jannaschii (strain ATCC 43067 / DSM 2661 / JAL-1 / JCM 10045 / NBRC 100440) (Methanococcus jannaschii).